A 200-amino-acid polypeptide reads, in one-letter code: Somatotropin (200 aa).

Positions 1–22 (MARVLVVLSVVVASLFFSQGAT) are cleaved as a signal peptide. Histidine 38 contributes to the Zn(2+) binding site. Cysteine 71 and cysteine 173 are disulfide-bonded. Glutamate 182 contacts Zn(2+). A disulfide bond links cysteine 190 and cysteine 198.

The protein belongs to the somatotropin/prolactin family.

The protein localises to the secreted. In terms of biological role, growth hormone plays an important role in growth control and is involved in the regulation of several anabolic processes. Implicated as an osmoregulatory substance important for seawater adaptation. The sequence is that of Somatotropin (gh) from Heteropneustes fossilis (Stinging catfish).